The primary structure comprises 159 residues: Transcriptional repressor NrdR (159 aa).

Residues 1-11 show a composition bias toward polar residues; the sequence is MQCPTCQNTDS. The disordered stretch occupies residues 1–21; it reads MQCPTCQNTDSRVLESRSADS. A zinc finger spans residues 3–34; the sequence is CPTCQNTDSRVLESRSADSGKSVRRRRECLNC. The region spanning 49-139 is the ATP-cone domain; the sequence is VSVLKKDGSR…VYRKFNGVKD (91 aa).

This sequence belongs to the NrdR family. Zn(2+) serves as cofactor.

In terms of biological role, negatively regulates transcription of bacterial ribonucleotide reductase nrd genes and operons by binding to NrdR-boxes. This is Transcriptional repressor NrdR from Prochlorococcus marinus (strain MIT 9301).